The primary structure comprises 737 residues: Phosphoribosylformylglycinamidine synthase subunit PurL (737 aa).

His50 is a catalytic residue. Residues Tyr53 and Lys92 each contribute to the ATP site. Glu94 contributes to the Mg(2+) binding site. Residues 95–98 (SHNH) and Arg117 contribute to the substrate site. His96 (proton acceptor) is an active-site residue. A Mg(2+)-binding site is contributed by Asp118. Position 241 (Gln241) interacts with substrate. Residue Asp269 participates in Mg(2+) binding. 313–315 (ESQ) is a substrate binding site. ATP-binding residues include Asp494 and Gly531. A Mg(2+)-binding site is contributed by Asn532. Ser534 provides a ligand contact to substrate.

This sequence belongs to the FGAMS family. In terms of assembly, monomer. Part of the FGAM synthase complex composed of 1 PurL, 1 PurQ and 2 PurS subunits.

It is found in the cytoplasm. It carries out the reaction N(2)-formyl-N(1)-(5-phospho-beta-D-ribosyl)glycinamide + L-glutamine + ATP + H2O = 2-formamido-N(1)-(5-O-phospho-beta-D-ribosyl)acetamidine + L-glutamate + ADP + phosphate + H(+). It participates in purine metabolism; IMP biosynthesis via de novo pathway; 5-amino-1-(5-phospho-D-ribosyl)imidazole from N(2)-formyl-N(1)-(5-phospho-D-ribosyl)glycinamide: step 1/2. Part of the phosphoribosylformylglycinamidine synthase complex involved in the purines biosynthetic pathway. Catalyzes the ATP-dependent conversion of formylglycinamide ribonucleotide (FGAR) and glutamine to yield formylglycinamidine ribonucleotide (FGAM) and glutamate. The FGAM synthase complex is composed of three subunits. PurQ produces an ammonia molecule by converting glutamine to glutamate. PurL transfers the ammonia molecule to FGAR to form FGAM in an ATP-dependent manner. PurS interacts with PurQ and PurL and is thought to assist in the transfer of the ammonia molecule from PurQ to PurL. This is Phosphoribosylformylglycinamidine synthase subunit PurL from Nitrobacter winogradskyi (strain ATCC 25391 / DSM 10237 / CIP 104748 / NCIMB 11846 / Nb-255).